The following is a 489-amino-acid chain: N-succinylglutamate 5-semialdehyde dehydrogenase (489 aa).

Residue 221–226 coordinates NAD(+); sequence GSSGTG. Active-site residues include glutamate 244 and cysteine 278.

The protein belongs to the aldehyde dehydrogenase family. AstD subfamily.

It catalyses the reaction N-succinyl-L-glutamate 5-semialdehyde + NAD(+) + H2O = N-succinyl-L-glutamate + NADH + 2 H(+). Its pathway is amino-acid degradation; L-arginine degradation via AST pathway; L-glutamate and succinate from L-arginine: step 4/5. Catalyzes the NAD-dependent reduction of succinylglutamate semialdehyde into succinylglutamate. This is N-succinylglutamate 5-semialdehyde dehydrogenase from Sorangium cellulosum (strain So ce56) (Polyangium cellulosum (strain So ce56)).